Consider the following 57-residue polypeptide: MKKLALILFMGTLVSFYADAGRKPCSGSKGGISHCTAGGKFVCNDGSISASKKTCTN.

A signal peptide spans 1–20; sequence MKKLALILFMGTLVSFYADA.

This is an uncharacterized protein from Escherichia coli (strain K12).